We begin with the raw amino-acid sequence, 1004 residues long: Glycine dehydrogenase (decarboxylating), mitochondrial (1004 aa).

Lysine 738 carries the post-translational modification N6-(pyridoxal phosphate)lysine.

Belongs to the GcvP family. Homodimer. Interacts with GCSH. The glycine cleavage system is composed of four proteins: P (GLDC), T (GCST), L (DLD) and H (GCSH). The cofactor is pyridoxal 5'-phosphate. In terms of tissue distribution, liver (at protein level).

Its subcellular location is the mitochondrion. It carries out the reaction N(6)-[(R)-lipoyl]-L-lysyl-[glycine-cleavage complex H protein] + glycine + H(+) = N(6)-[(R)-S(8)-aminomethyldihydrolipoyl]-L-lysyl-[glycine-cleavage complex H protein] + CO2. With respect to regulation, stimulated by lipoic acid. Inhibited in presence of methylamine. The glycine cleavage system catalyzes the degradation of glycine. The P protein (GLDC) binds the alpha-amino group of glycine through its pyridoxal phosphate cofactor; CO(2) is released and the remaining methylamine moiety is then transferred to the lipoamide cofactor of the H protein (GCSH). The polypeptide is Glycine dehydrogenase (decarboxylating), mitochondrial (Gallus gallus (Chicken)).